The sequence spans 151 residues: Small ribosomal subunit protein uS15 (151 aa).

Belongs to the universal ribosomal protein uS15 family.

The protein is Small ribosomal subunit protein uS15 (RpS13) of Spodoptera frugiperda (Fall armyworm).